Reading from the N-terminus, the 93-residue chain is Bombyxin-related peptide B (93 aa).

The N-terminal stretch at methionine 1–glycine 21 is a signal peptide. 3 cysteine pairs are disulfide-bonded: cysteine 25-cysteine 80, cysteine 37-cysteine 93, and cysteine 79-cysteine 84. The propeptide at serine 47 to glycine 71 is c peptide like.

Belongs to the insulin family. As to quaternary structure, heterodimer of a B chain and an A chain linked by two disulfide bonds. Located in 4 pairs of medial neurosecretory cells in the brain.

The protein localises to the secreted. This is Bombyxin-related peptide B from Agrius convolvuli (Convolvulus hawk-moth).